The chain runs to 167 residues: Small ribosomal subunit protein mS25 (167 aa).

Belongs to the mitochondrion-specific ribosomal protein mS25 family. As to quaternary structure, component of the mitochondrial ribosome small subunit (28S) which comprises a 12S rRNA and about 30 distinct proteins.

The protein localises to the mitochondrion. The chain is Small ribosomal subunit protein mS25 (mRpS25) from Drosophila melanogaster (Fruit fly).